We begin with the raw amino-acid sequence, 310 residues long: Nucleotide-binding protein Mmc1_3333 (310 aa).

An ATP-binding site is contributed by 19 to 26 (GLSGAGKS).

Belongs to the RapZ-like family.

In terms of biological role, displays ATPase and GTPase activities. This Magnetococcus marinus (strain ATCC BAA-1437 / JCM 17883 / MC-1) protein is Nucleotide-binding protein Mmc1_3333.